The following is a 577-amino-acid chain: Adenine deaminase (577 aa).

This sequence belongs to the metallo-dependent hydrolases superfamily. Adenine deaminase family. Requires Mn(2+) as cofactor.

The enzyme catalyses adenine + H2O + H(+) = hypoxanthine + NH4(+). The chain is Adenine deaminase from Kosmotoga olearia (strain ATCC BAA-1733 / DSM 21960 / TBF 19.5.1).